The following is a 435-amino-acid chain: Cytidine monophosphate-N-acetylneuraminic acid hydroxylase (435 aa).

This sequence belongs to the CMP-Neu5Ac hydroxylase family. The cofactor is [2Fe-2S] cluster.

The protein resides in the cytoplasm. It carries out the reaction CMP-N-acetyl-beta-neuraminate + 2 Fe(II)-[cytochrome b5] + O2 + 2 H(+) = CMP-N-glycoloyl-beta-neuraminate + 2 Fe(III)-[cytochrome b5] + H2O. Its pathway is amino-sugar metabolism; N-acetylneuraminate metabolism. Sialic acids are components of carbohydrate chains of glycoconjugates and are involved in cell-cell recognition and cell-pathogen interactions. Catalyzes the conversion of CMP-N-acetylneuraminic acid (CMP-Neu5Ac) into its hydroxylated derivative CMP-N-glycolylneuraminic acid (CMP-Neu5Gc), a sialic acid abundantly expressed at the surface of many cells. In Sus scrofa (Pig), this protein is Cytidine monophosphate-N-acetylneuraminic acid hydroxylase.